A 434-amino-acid chain; its full sequence is uncharacterized protein (434 aa).

Residues 4–62 enclose the TRAM domain; the sequence is LLTIHTQVEGEITALAFGGAGILRYHGFVIFVPFTAPGDQIICRIIEIKKSFAVAELVK. [4Fe-4S] cluster is bound by residues C75, C81, C84, and C161. The S-adenosyl-L-methionine site is built by Q266, Y295, E316, and N364. C391 functions as the Nucleophile in the catalytic mechanism.

It belongs to the class I-like SAM-binding methyltransferase superfamily. RNA M5U methyltransferase family.

This is an uncharacterized protein from Protochlamydia amoebophila (strain UWE25).